We begin with the raw amino-acid sequence, 359 residues long: Stearoyl-CoA desaturase (359 aa).

Residues M1–V72 lie on the Cytoplasmic side of the membrane. Residues W73 to I93 traverse the membrane as a helical segment. Position 75 (N75) interacts with substrate. Over P94–K97 the chain is Lumenal. Residues I98–G118 form a helical membrane-spanning segment. The Cytoplasmic segment spans residues A119–Y217. Fe cation contacts are provided by H120 and H125. The short motif at H120–H125 is the Histidine box-1 element. Residues N148, R155, and D156 each coordinate substrate. Fe cation-binding residues include H157, H160, and H161. The short motif at H157–H161 is the Histidine box-2 element. Positions 188 and 189 each coordinate substrate. At S203 the chain carries Phosphoserine. The helical transmembrane segment at Y218–C237 threads the bilayer. At W238–A241 the chain is on the lumenal side. A helical membrane pass occupies residues F242–L263. W262 is a binding site for substrate. The Cytoplasmic segment spans residues V264–G359. 4 residues coordinate Fe cation: H269, H298, H301, and H302. Positions H298 to H302 match the Histidine box-3 motif.

Belongs to the fatty acid desaturase type 1 family. Requires Fe(2+) as cofactor.

It localises to the endoplasmic reticulum membrane. It catalyses the reaction octadecanoyl-CoA + 2 Fe(II)-[cytochrome b5] + O2 + 2 H(+) = (9Z)-octadecenoyl-CoA + 2 Fe(III)-[cytochrome b5] + 2 H2O. The enzyme catalyses hexadecanoyl-CoA + 2 Fe(II)-[cytochrome b5] + O2 + 2 H(+) = (9Z)-hexadecenoyl-CoA + 2 Fe(III)-[cytochrome b5] + 2 H2O. Stearoyl-CoA desaturase that utilizes O(2) and electrons from reduced cytochrome b5 to introduce the first double bond into saturated fatty acyl-CoA substrates. Catalyzes the insertion of a cis double bond at the delta-9 position into fatty acyl-CoA substrates including palmitoyl-CoA and stearoyl-CoA. Gives rise to a mixture of 16:1 and 18:1 unsaturated fatty acids. Plays an important role in lipid biosynthesis. Plays an important role in regulating the expression of genes that are involved in lipogenesis and in regulating mitochondrial fatty acid oxidation. Plays an important role in body energy homeostasis. Contributes to the biosynthesis of membrane phospholipids, cholesterol esters and triglycerides. This chain is Stearoyl-CoA desaturase (SCD), found in Sus scrofa (Pig).